Here is a 298-residue protein sequence, read N- to C-terminus: Glutamyl-Q tRNA(Asp) synthetase (298 aa).

L-glutamate-binding positions include 9 to 13 and glutamate 45; that span reads RFAPS. Residues 12-22 carry the 'HIGH' region motif; the sequence is PSPSGELHFGS. Zn(2+) contacts are provided by cysteine 101, cysteine 103, tyrosine 115, and cysteine 119. 2 residues coordinate L-glutamate: tyrosine 172 and arginine 190. A 'KMSKS' region motif is present at residues 228 to 232; the sequence is KLSKQ. Lysine 231 provides a ligand contact to ATP.

The protein belongs to the class-I aminoacyl-tRNA synthetase family. GluQ subfamily. Zn(2+) is required as a cofactor.

Catalyzes the tRNA-independent activation of glutamate in presence of ATP and the subsequent transfer of glutamate onto a tRNA(Asp). Glutamate is transferred on the 2-amino-5-(4,5-dihydroxy-2-cyclopenten-1-yl) moiety of the queuosine in the wobble position of the QUC anticodon. This is Glutamyl-Q tRNA(Asp) synthetase from Cronobacter sakazakii (strain ATCC BAA-894) (Enterobacter sakazakii).